Here is a 311-residue protein sequence, read N- to C-terminus: Alpha/beta hydrolase domain-containing protein 17C (311 aa).

Residues 48 to 67 form a disordered region; the sequence is EAPASTAQQPPREEGSGEPA. Catalysis depends on charge relay system residues S193, D258, and H287.

Belongs to the AB hydrolase superfamily. ABHD17 family. Palmitoylated on cysteine residues located in a cysteine cluster at the N-terminus which promotes membrane localization.

It is found in the recycling endosome membrane. It localises to the cell projection. The protein localises to the dendritic spine. Its subcellular location is the postsynaptic density membrane. The catalysed reaction is S-hexadecanoyl-L-cysteinyl-[protein] + H2O = L-cysteinyl-[protein] + hexadecanoate + H(+). Hydrolyzes fatty acids from S-acylated cysteine residues in proteins. Has depalmitoylating activity towards NRAS. The chain is Alpha/beta hydrolase domain-containing protein 17C from Xenopus laevis (African clawed frog).